The chain runs to 290 residues: uncharacterized protein (290 aa).

The stretch at 161-216 (SNQREVESLEQLVHEQLNKLNTESKMEFENRKNDTKNEVQQLSARIVELHNLLAVS) forms a coiled coil. A helical membrane pass occupies residues 236–256 (AGVVMAFTGFLVLVIPFGLGV).

It localises to the mitochondrion membrane. This is an uncharacterized protein from Schizosaccharomyces pombe (strain 972 / ATCC 24843) (Fission yeast).